Here is an 862-residue protein sequence, read N- to C-terminus: Protein translocase subunit SecA (862 aa).

ATP-binding positions include Q88, 106 to 110 (GEGKT), and D506. Residues C839, C841, C850, and H851 each coordinate Zn(2+).

This sequence belongs to the SecA family. As to quaternary structure, monomer and homodimer. Part of the essential Sec protein translocation apparatus which comprises SecA, SecYEG and auxiliary proteins SecDF-YajC and YidC. Zn(2+) is required as a cofactor.

The protein resides in the cell inner membrane. It is found in the cytoplasm. It carries out the reaction ATP + H2O + cellular proteinSide 1 = ADP + phosphate + cellular proteinSide 2.. In terms of biological role, part of the Sec protein translocase complex. Interacts with the SecYEG preprotein conducting channel. Has a central role in coupling the hydrolysis of ATP to the transfer of proteins into and across the cell membrane, serving as an ATP-driven molecular motor driving the stepwise translocation of polypeptide chains across the membrane. The protein is Protein translocase subunit SecA of Campylobacter jejuni subsp. jejuni serotype O:2 (strain ATCC 700819 / NCTC 11168).